Consider the following 278-residue polypeptide: Neuronal membrane glycoprotein M6-a (278 aa).

At methionine 1 the chain carries N-acetylmethionine. Residues 1–22 are Cytoplasmic-facing; sequence MEENMEEGQTQKGCFECCIKCL. A helical membrane pass occupies residues 23-43; it reads GGIPYASLIATILLYAGVALF. Over 44–84 the chain is Extracellular; that stretch reads CGCGHEALSGTVNILQTYFELARTAGDTLDVFTMIDIFKYV. Residues 85 to 105 traverse the membrane as a helical segment; the sequence is IYGIAAAFFVYGILLMVEGFF. The Cytoplasmic portion of the chain corresponds to 106 to 127; the sequence is TTGAIKDLYGDFKITTCGRCVS. Residues 128-148 form a helical membrane-spanning segment; the sequence is AWFIMLTYLFMLAWLGVTAFT. The Extracellular portion of the chain corresponds to 149–213; sequence SLPVYMYFNV…STELNMTFHL (65 aa). N-linked (GlcNAc...) asparagine glycosylation is present at asparagine 164. A disulfide bond links cysteine 174 and cysteine 192. The N-linked (GlcNAc...) asparagine glycan is linked to asparagine 208. A helical membrane pass occupies residues 214–234; that stretch reads FIVALAGAGAAVIAMVHYLMV. The Cytoplasmic segment spans residues 235–278; that stretch reads LSANWAYVKDACRMQKYEDIKSKEEQELHDIHSTRSKERLNAYT. The residue at position 256 (serine 256) is a Phosphoserine. Phosphothreonine is present on threonine 278.

This sequence belongs to the myelin proteolipid protein family. In terms of assembly, interacts with OPRM1. Interacts with palmitoyltransferase ZDHHC17/HIP14; the interaction leads to palmitoylation of GPM6A. In terms of processing, N-glycosylated. Palmitoylated by ZDHHC17/HIP14. In terms of tissue distribution, widely expressed in the CNS. Found especially in the granule cell layer of the cerebellum but not in the molecular layer or white matter. Expressed in the immature embryonic retina including the nerve fiber layer (NFL), inner plexiform layer (IPL), and outer plexiform layer (OPL). Weakly expressed in processes of Mueller glia cells.

Its subcellular location is the cell membrane. The protein localises to the cell projection. It localises to the axon. The protein resides in the growth cone. It is found in the dendritic spine. Its subcellular location is the filopodium. The protein localises to the neuron projection. Involved in neuronal differentiation, including differentiation and migration of neuronal stem cells. Plays a role in neuronal plasticity and is involved in neurite and filopodia outgrowth, filopodia motility and probably synapse formation. Gpm6a-induced filopodia formation involves mitogen-activated protein kinase (MAPK) and Src signaling pathways. Conflictingly, PubMed:22162747 reports that induced cellular protrusions are simple membrane-wrapped tubules without actin or tubulin-based cytoskeletons and with Gpm6a gliding along membrane edges indicative for a function in actin-independent membrane deformation. May be involved in neuronal NGF-dependent Ca(2+) influx. May be involved in regulation of endocytosis and intracellular trafficking of G-protein-coupled receptors (GPCRs); enhances internalization and recycling of mu-type opioid receptor. The protein is Neuronal membrane glycoprotein M6-a (Gpm6a) of Mus musculus (Mouse).